The primary structure comprises 29 residues: Brevinin-2Td (29 aa).

Cys23 and Cys29 are joined by a disulfide.

It belongs to the frog skin active peptide (FSAP) family. Brevinin subfamily. As to expression, expressed by the skin glands.

The protein localises to the secreted. Its function is as follows. Antibacterial activity against representative Gram-negative and Gram-positive bacteria. This Rana temporaria (European common frog) protein is Brevinin-2Td.